Reading from the N-terminus, the 286-residue chain is Putative cyclin-H (286 aa).

Residues 79 to 148 (AIIYIKRFYL…ILESLNFNLI (70 aa)) enclose the Cyclin N-terminal domain. A disordered region spans residues 235–286 (NNNNNNNNNNNNNNNNNNNNNNNNNNNNNNNNNNNNNNNNNNNNNNNNNLLL).

Belongs to the cyclin family. Cyclin C subfamily.

The protein resides in the nucleus. Functionally, may regulate cdk7 involved in transcription regulation and cell cycle progression. In Dictyostelium discoideum (Social amoeba), this protein is Putative cyclin-H (cycH).